Here is a 468-residue protein sequence, read N- to C-terminus: Cysteine--tRNA ligase (468 aa).

A Zn(2+)-binding site is contributed by Cys28. The 'HIGH' region signature appears at 30 to 40 (PTVYNYIHIGN). Residues Cys212, His237, and Glu241 each coordinate Zn(2+). Residues 271–275 (KMSKS) carry the 'KMSKS' region motif. Lys274 contacts ATP.

It belongs to the class-I aminoacyl-tRNA synthetase family. Monomer. Zn(2+) is required as a cofactor.

The protein resides in the cytoplasm. It carries out the reaction tRNA(Cys) + L-cysteine + ATP = L-cysteinyl-tRNA(Cys) + AMP + diphosphate. The chain is Cysteine--tRNA ligase from Latilactobacillus sakei subsp. sakei (strain 23K) (Lactobacillus sakei subsp. sakei).